The chain runs to 357 residues: Neutral protease 2 homolog UREG_02006 (357 aa).

The signal sequence occupies residues 1–19 (MLFSSRFLALAALLGQALA). The propeptide occupies 20–179 (LPIDDFSQSD…QSAVPTIEKR (160 aa)). 2 cysteine pairs are disulfide-bonded: Cys-187-Cys-259 and Cys-266-Cys-284. His-308 provides a ligand contact to Zn(2+). The active site involves Glu-309. The Zn(2+) site is built by His-312 and Asp-323.

It belongs to the peptidase M35 family. Zn(2+) is required as a cofactor.

The protein localises to the secreted. The catalysed reaction is Preferential cleavage of bonds with hydrophobic residues in P1'. Also 3-Asn-|-Gln-4 and 8-Gly-|-Ser-9 bonds in insulin B chain.. In terms of biological role, secreted metalloproteinase that allows assimilation of proteinaceous substrates. Shows high activities on basic nuclear substrates such as histone and protamine. In Uncinocarpus reesii (strain UAMH 1704), this protein is Neutral protease 2 homolog UREG_02006.